We begin with the raw amino-acid sequence, 397 residues long: Homeobox protein knotted-1-like 2 (397 aa).

Disordered regions lie at residues 43-68 (TFHL…SPGT), 172-191 (FEAR…DPEL), and 233-276 (NNNA…PRAE). A compositionally biased stretch (gly residues) spans 49–58 (SGGGGGGGSG). The 21-residue stretch at 279-299 (ELKNHLLRKYSGYLSSLKQEL) folds into the ELK domain. Positions 300–363 (SKKKKKGKLP…NQRKRHWKPS (64 aa)) form a DNA-binding region, homeobox; TALE-type.

The protein belongs to the TALE/KNOX homeobox family. Expressed only in the stems.

It localises to the nucleus. Its function is as follows. Probably binds to the DNA sequence 5'-TGAC-3'. The protein is Homeobox protein knotted-1-like 2 of Malus domestica (Apple).